We begin with the raw amino-acid sequence, 457 residues long: tRNA modification GTPase MnmE (457 aa).

The (6S)-5-formyl-5,6,7,8-tetrahydrofolate site is built by Arg23, Glu86, and Arg125. The 157-residue stretch at 221–377 folds into the TrmE-type G domain; that stretch reads GVSVLIAGKP…LREAVFETFI (157 aa). Asn231 is a K(+) binding site. GTP is bound by residues 231-236, 250-256, and 275-278; these read NVGKSS, TSVPGTT, and DTAG. Ser235 is a binding site for Mg(2+). Residues Thr250, Val252, and Thr255 each coordinate K(+). A Mg(2+)-binding site is contributed by Thr256. Lys457 serves as a coordination point for (6S)-5-formyl-5,6,7,8-tetrahydrofolate.

It belongs to the TRAFAC class TrmE-Era-EngA-EngB-Septin-like GTPase superfamily. TrmE GTPase family. As to quaternary structure, homodimer. Heterotetramer of two MnmE and two MnmG subunits. K(+) serves as cofactor.

The protein resides in the cytoplasm. In terms of biological role, exhibits a very high intrinsic GTPase hydrolysis rate. Involved in the addition of a carboxymethylaminomethyl (cmnm) group at the wobble position (U34) of certain tRNAs, forming tRNA-cmnm(5)s(2)U34. The sequence is that of tRNA modification GTPase MnmE from Geobacter metallireducens (strain ATCC 53774 / DSM 7210 / GS-15).